The primary structure comprises 265 residues: Probable ribose-5-phosphate isomerase 2 (265 aa).

Ala-2 is subject to N-acetylalanine. Ser-96 is subject to Phosphoserine.

It belongs to the ribose 5-phosphate isomerase family.

It localises to the cytoplasm. The enzyme catalyses aldehydo-D-ribose 5-phosphate = D-ribulose 5-phosphate. The protein operates within carbohydrate degradation; pentose phosphate pathway; D-ribose 5-phosphate from D-ribulose 5-phosphate (non-oxidative stage): step 1/1. Its function is as follows. Catalyzes the reversible conversion of ribose-5-phosphate to ribulose 5-phosphate. The chain is Probable ribose-5-phosphate isomerase 2 (RPI2) from Arabidopsis thaliana (Mouse-ear cress).